The chain runs to 93 residues: UPF0390 protein C24B10.18 (93 aa).

The segment at 1-32 is disordered; sequence MAQGEFKKKKNSSANKGGRVTKHSKNPKKGAR. Residues 19-31 are compositionally biased toward basic residues; the sequence is RVTKHSKNPKKGA.

Belongs to the UPF0390 family.

The protein is UPF0390 protein C24B10.18 of Schizosaccharomyces pombe (strain 972 / ATCC 24843) (Fission yeast).